The chain runs to 660 residues: Pro-secreted protein ORF2 (660 aa).

An N-terminal signal peptide occupies residues 1 to 19 (MRPRPILLLLLMFLPMLPA). 2 disordered regions span residues 18 to 44 (PAPP…FWGD) and 64 to 123 (PDVT…PPVP). A Nuclear localization signal motif is present at residues 28 to 33 (RRRGRR). Low complexity predominate over residues 92 to 116 (QRPAAASRRRPTTAGAAPLTAVAPA). Residues Asn-137 and Asn-310 are each glycosylated (N-linked (GlcNAc...) asparagine; by host). A particle formation region spans residues 368–394 (IALTLFNLADTLLGGLPTELISSAGGQ). Asn-562 carries N-linked (GlcNAc...) asparagine; by host glycosylation. The interval 585 to 610 (TTSLGAGPVSISAVAVLAPHSALALL) is oligomerization.

The protein belongs to the hepevirus capsid protein family. As to quaternary structure, homodimer. In terms of assembly, self-assembles to form the capsid. The capsid is dominated by dimers that define the 30 morphological units. Interacts with phosphorylated protein ORF3. Interacts with host TMEM134. Interacts with host ASGR1 and ASGR2; these interactions facilitate infection of host hepatocytes. Post-translationally, cleaved by host proteases in the N-terminus. In terms of processing, N-glycosylated. Not N-glycosylated. The C-terminus of the capsid protein ORF2 is truncated in non-enveloped virions shedded in feces, probably due to host proteases.

Its subcellular location is the secreted. The protein resides in the virion. It localises to the host cytoplasm. The protein localises to the host endoplasmic reticulum. It is found in the host Golgi apparatus. Its subcellular location is the host cell surface. The protein resides in the host nucleus. Its function is as follows. Plays a role in the inhibition of host antibody-mediated neutralization without blocking viral cell entry. Functionally, forms an icosahedral capsid with a T=1 symmetry and a 34 nm diameter. The capsid is composed of 60 copies linked to each other. Binds to the 5' end of the genomic RNA to mediate genome encapsidation. Binds to heparin surface proteoglycans (HSPGs) to mediate viral entry. Additionally, the interactions with host ASGR1 and ASGR2 facilitate viral infection of hepatocytes. Inhibits IFN production by blocking host TBK1-induced IRF3 phosphorylation. The nuclear form probably modulates host gene expression. This Homo sapiens (Human) protein is Pro-secreted protein ORF2.